The sequence spans 508 residues: Photosystem II CP47 reaction center protein (508 aa).

6 consecutive transmembrane segments (helical) span residues 21–36 (AVHIMHTALVSGWAGS), 101–115 (IILSGLLFLAAIWHW), 140–156 (GIHLFLSGLLCFGFGAF), 203–218 (IAAGILGILAGLFHLS), 237–252 (VLSSSIAAVFFAAFIV), and 457–472 (CFALLFFFGHIWHGAR).

This sequence belongs to the PsbB/PsbC family. PsbB subfamily. PSII is composed of 1 copy each of membrane proteins PsbA, PsbB, PsbC, PsbD, PsbE, PsbF, PsbH, PsbI, PsbJ, PsbK, PsbL, PsbM, PsbT, PsbX, PsbY, PsbZ, Psb30/Ycf12, at least 3 peripheral proteins of the oxygen-evolving complex and a large number of cofactors. It forms dimeric complexes. Requires Binds multiple chlorophylls. PSII binds additional chlorophylls, carotenoids and specific lipids. as cofactor.

It is found in the plastid. Its subcellular location is the chloroplast thylakoid membrane. In terms of biological role, one of the components of the core complex of photosystem II (PSII). It binds chlorophyll and helps catalyze the primary light-induced photochemical processes of PSII. PSII is a light-driven water:plastoquinone oxidoreductase, using light energy to abstract electrons from H(2)O, generating O(2) and a proton gradient subsequently used for ATP formation. In Chara vulgaris (Common stonewort), this protein is Photosystem II CP47 reaction center protein.